A 94-amino-acid polypeptide reads, in one-letter code: Integration host factor subunit beta (94 aa).

It belongs to the bacterial histone-like protein family. In terms of assembly, heterodimer of an alpha and a beta chain.

This protein is one of the two subunits of integration host factor, a specific DNA-binding protein that functions in genetic recombination as well as in transcriptional and translational control. In Haemophilus influenzae (strain 86-028NP), this protein is Integration host factor subunit beta.